A 545-amino-acid polypeptide reads, in one-letter code: CTP synthase (545 aa).

Positions 1–265 (MNGIKHIFIT…DKFVIKHLDL (265 aa)) are amidoligase domain. Position 15 (Ser15) interacts with CTP. UTP is bound at residue Ser15. Residues 16–21 (SIGKGL) and Asp73 each bind ATP. Mg(2+) is bound by residues Asp73 and Glu141. CTP is bound by residues 148-150 (DIE), 188-193 (KTKPTQ), and Lys224. Residues 188 to 193 (KTKPTQ) and Lys224 contribute to the UTP site. In terms of domain architecture, Glutamine amidotransferase type-1 spans 290 to 534 (EIAIIGKYTG…VAAALARKEI (245 aa)). Gly349 contacts L-glutamine. The active-site Nucleophile; for glutamine hydrolysis is the Cys376. Residues 377–380 (LGMQ), Glu400, and Arg460 contribute to the L-glutamine site. Active-site residues include His507 and Glu509.

The protein belongs to the CTP synthase family. In terms of assembly, homotetramer.

It catalyses the reaction UTP + L-glutamine + ATP + H2O = CTP + L-glutamate + ADP + phosphate + 2 H(+). The catalysed reaction is L-glutamine + H2O = L-glutamate + NH4(+). The enzyme catalyses UTP + NH4(+) + ATP = CTP + ADP + phosphate + 2 H(+). It participates in pyrimidine metabolism; CTP biosynthesis via de novo pathway; CTP from UDP: step 2/2. With respect to regulation, allosterically activated by GTP, when glutamine is the substrate; GTP has no effect on the reaction when ammonia is the substrate. The allosteric effector GTP functions by stabilizing the protein conformation that binds the tetrahedral intermediate(s) formed during glutamine hydrolysis. Inhibited by the product CTP, via allosteric rather than competitive inhibition. In terms of biological role, catalyzes the ATP-dependent amination of UTP to CTP with either L-glutamine or ammonia as the source of nitrogen. Regulates intracellular CTP levels through interactions with the four ribonucleotide triphosphates. In Tropheryma whipplei (strain TW08/27) (Whipple's bacillus), this protein is CTP synthase.